The sequence spans 163 residues: Inorganic pyrophosphatase (163 aa).

A Mg(2+)-binding site is contributed by glutamate 8. Substrate-binding residues include lysine 16, arginine 30, and tyrosine 42. Mg(2+) contacts are provided by aspartate 52, aspartate 57, aspartate 84, and aspartate 89. The active-site Proton acceptor is aspartate 89. Position 126 (tyrosine 126) interacts with substrate.

This sequence belongs to the PPase family. As to quaternary structure, homohexamer. Mg(2+) serves as cofactor.

Its subcellular location is the cytoplasm. It carries out the reaction diphosphate + H2O = 2 phosphate + H(+). Its function is as follows. Catalyzes the hydrolysis of inorganic pyrophosphate (PPi) forming two phosphate ions. This is Inorganic pyrophosphatase from Streptomyces coelicolor (strain ATCC BAA-471 / A3(2) / M145).